The sequence spans 167 residues: uncharacterized protein (167 aa).

This is an uncharacterized protein from Homo sapiens (Human).